The following is a 361-amino-acid chain: Probable mannose-1-phosphate guanylyltransferase 2 (361 aa).

Residues L6 and V7 each contribute to the GDP-alpha-D-mannose site. Diphosphate-binding residues include G9, G11, T12, R13, and K23. GDP-alpha-D-mannose is bound by residues G85, N109, D111, G146, and N173.

Belongs to the transferase hexapeptide repeat family.

The enzyme catalyses alpha-D-mannose 1-phosphate + GTP + H(+) = GDP-alpha-D-mannose + diphosphate. It functions in the pathway nucleotide-sugar biosynthesis; GDP-alpha-D-mannose biosynthesis; GDP-alpha-D-mannose from alpha-D-mannose 1-phosphate (GTP route): step 1/1. Functionally, catalyzes a reaction of the Smirnoff-Wheeler pathway, the major route to ascorbate biosynthesis in plants. The protein is Probable mannose-1-phosphate guanylyltransferase 2 of Oryza sativa subsp. japonica (Rice).